Consider the following 344-residue polypeptide: MCAVLRQPKCVKLRALHSACKFGVAARSCQELLRKGCVRFQLPMPGSRLCLYEDGTEVTDDCFPGLPNDAELLLLTAGETWHGYVSDITRFLSVFNEPHAGVIQAARQLLSDEQAPLRQKLLADLLHHVSQNITAETREQDPSWFEGLESRFRNKSGYLRYSCESRIRGYLREVSAYTSMVDEAAQEEYLRVLGSMCQKLKSVQYNGSYFDRGAEASSRLCTPEGWFSCQGPFDLESCLSKHSINPYGNRESRILFSTWNLDHIIEKKRTVVPTLAEAIQDGREVNWEYFYSLLFTAENLKLVHIACHKKTTHKLECDRSRIYRPQTGSRRKQPARKKRPARKR.

Residues 7-83 (QPKCVKLRAL…LLTAGETWHG (77 aa)) enclose the CIDE-N domain.

As to quaternary structure, heterodimer of DFFA and DFFB. Interacts with H1-1.

The protein localises to the cytoplasm. It is found in the nucleus. Its activity is regulated as follows. Inhibited by DFFA (DFF45). Functionally, nuclease that induces DNA fragmentation and chromatin condensation during apoptosis. Degrades naked DNA and induces apoptotic morphology. The polypeptide is DNA fragmentation factor subunit beta (Dffb) (Mus musculus (Mouse)).